A 135-amino-acid chain; its full sequence is Ribosome-binding factor A (135 aa).

It belongs to the RbfA family. Monomer. Binds 30S ribosomal subunits, but not 50S ribosomal subunits or 70S ribosomes.

Its subcellular location is the cytoplasm. One of several proteins that assist in the late maturation steps of the functional core of the 30S ribosomal subunit. Associates with free 30S ribosomal subunits (but not with 30S subunits that are part of 70S ribosomes or polysomes). Required for efficient processing of 16S rRNA. May interact with the 5'-terminal helix region of 16S rRNA. This chain is Ribosome-binding factor A, found in Dinoroseobacter shibae (strain DSM 16493 / NCIMB 14021 / DFL 12).